Consider the following 132-residue polypeptide: MSGGKGKAGTSEKASTSRSAKAGLTFPVGRVHRLLRKGNYAQRIGSGAPVYLTSVLEYLAAEILELAGNAARDNKKSRIIPRHLQLAIRNDEELNKLLGDVTIAQGGVLPNIHQNLLPKKSGKGGVKASQEL.

The interval 1-21 (MSGGKGKAGTSEKASTSRSAK) is disordered. Serine 2 carries the N-acetylserine modification. Residues lysine 5 and lysine 7 each carry the N6-acetyllysine modification. An N5-methylglutamine modification is found at glutamine 105. Phosphoserine is present on serine 129. The short motif at 129 to 130 (SQ) is the [ST]-Q motif element.

Belongs to the histone H2A family. In terms of assembly, the nucleosome is a histone octamer containing two molecules each of H2A, H2B, H3 and H4 assembled in one H3-H4 heterotetramer and two H2A-H2B heterodimers. The octamer wraps approximately 147 bp of DNA. Post-translationally, phosphorylated to form H2AS128ph (gamma-H2A) in response to DNA double-strand breaks (DSBs) generated by exogenous genotoxic agents and by stalled replication forks. Phosphorylation is dependent on the DNA damage checkpoint kinases MEC1/ATR and TEL1/ATM, spreads on either side of a detected DSB site and may mark the surrounding chromatin for recruitment of proteins required for DNA damage signaling and repair. Gamma-H2A is removed from the DNA prior to the strand invasion-primer extension step of the repair process and subsequently dephosphorylated. Dephosphorylation is necessary for efficient recovery from the DNA damage checkpoint. In terms of processing, acetylated by ESA1 to form H2AK4ac and H2AK7ac.

The protein resides in the nucleus. Its subcellular location is the chromosome. In terms of biological role, core component of nucleosome which plays a central role in DNA double strand break (DSB) repair. Nucleosomes wrap and compact DNA into chromatin, limiting DNA accessibility to the cellular machineries which require DNA as a template. Histones thereby play a central role in transcription regulation, DNA repair, DNA replication and chromosomal stability. DNA accessibility is regulated via a complex set of post-translational modifications of histones, also called histone code, and nucleosome remodeling. This Candida albicans (strain SC5314 / ATCC MYA-2876) (Yeast) protein is Histone H2A.1 (HTA1).